The sequence spans 428 residues: Histone-lysine N-methyltransferase SMYD3 (428 aa).

N-acetylmethionine is present on methionine 1. The SET domain maps to 4 to 240; that stretch reads LKVEKFTTAN…AGEELTICYL (237 aa). 14 to 16 serves as a coordination point for S-adenosyl-L-methionine; that stretch reads RGN. Residues cysteine 49, cysteine 52, cysteine 62, cysteine 65, cysteine 71, cysteine 75, histidine 83, and cysteine 87 each contribute to the Zn(2+) site. Residues 49 to 87 form an MYND-type zinc finger; that stretch reads CDRCLLGKEKLMRCSQCRIAKYCSAKCQKKAWPDHRREC. Residues tyrosine 124, asparagine 132, 205–206, tyrosine 239, and phenylalanine 259 each bind S-adenosyl-L-methionine; that span reads NH. The C-terminal domain; essential for histone methyltransferase activity, nuclear localization and mediates interaction with HSP90AA1 stretch occupies residues 272–428; sequence DADMLTGDEQ…EECDANIRAS (157 aa).

Belongs to the class V-like SAM-binding methyltransferase superfamily. Histone-lysine methyltransferase family. As to quaternary structure, interacts with HSPCA. Interacts with HELZ. Interacts with POLR2A; the interaction may be indirect and may be mediated by HELZ. Interacts with HSP90AA1; this interaction enhances SMYD3 histone-lysine N-methyltransferase.

Its subcellular location is the cytoplasm. It is found in the nucleus. The enzyme catalyses L-lysyl(4)-[histone H3] + 3 S-adenosyl-L-methionine = N(6),N(6),N(6)-trimethyl-L-lysyl(4)-[histone H3] + 3 S-adenosyl-L-homocysteine + 3 H(+). Histone methyltransferase activity strongly stimulated by HSPCA. In terms of biological role, histone methyltransferase. Specifically methylates 'Lys-4' of histone H3, inducing di- and tri-methylation, but not monomethylation. Also methylates 'Lys-5' of histone H4. Plays an important role in transcriptional activation as a member of an RNA polymerase complex. Binds DNA containing 5'-CCCTCC-3' or 5'-GAGGGG-3' sequences. This Mus musculus (Mouse) protein is Histone-lysine N-methyltransferase SMYD3 (Smyd3).